The primary structure comprises 84 residues: Small ribosomal subunit protein uS17 (84 aa).

It belongs to the universal ribosomal protein uS17 family. In terms of assembly, part of the 30S ribosomal subunit.

In terms of biological role, one of the primary rRNA binding proteins, it binds specifically to the 5'-end of 16S ribosomal RNA. The sequence is that of Small ribosomal subunit protein uS17 from Vibrio vulnificus (strain CMCP6).